The sequence spans 428 residues: Putative gustatory receptor 2a (428 aa).

Topologically, residues 1-40 are cytoplasmic; the sequence is MDTLRALEPLHRACQVCNLWPWRLAPPPDSEGILLRRSRW. Residues 41–61 form a helical membrane-spanning segment; the sequence is LELYGWTVLIAATSFTVYGLF. The Extracellular segment spans residues 62 to 145; that stretch reads QESSVEEKQD…INMRRQTSRR (84 aa). The chain crosses the membrane as a helical span at residues 146 to 166; it reads AVWILWGYAVSQLLILGAKLL. Residues 167–173 lie on the Cytoplasmic side of the membrane; the sequence is SRGDRFP. The helical transmembrane segment at 174 to 194 threads the bilayer; it reads IYWISYLLPLLVCGLRYFQIF. N-linked (GlcNAc...) asparagine glycosylation occurs at N195. Residues 195–250 are Extracellular-facing; the sequence is NATQLVRQRLDVLLVALQQLQLHQKGPAVDTVLEEQEDLEEAAMDRLIAVRLVYQR. The chain crosses the membrane as a helical span at residues 251–271; the sequence is VWALVALLNRCYGLSMLMQVG. At 272–300 the chain is on the cytoplasmic side; the sequence is NDFLAITSNCYWMFLNFRQSAASPFDILQ. The chain crosses the membrane as a helical span at residues 301-321; sequence IVASGVWSAPHLGNVLVLSLL. Over 322 to 349 the chain is Extracellular; sequence CDRTAQCASRLALCLHQVSVDLRNESHN. N345 carries N-linked (GlcNAc...) asparagine glycosylation. A helical membrane pass occupies residues 350–370; it reads ALVGTLVRYCAPLIILVPLQI. Residues 371–395 are Cytoplasmic-facing; that stretch reads TQFSLQLLHQRLHFSAAGFFNVDCT. The chain crosses the membrane as a helical span at residues 396–416; that stretch reads LLYTIVGATTTYLIILIQFHM. The Extracellular portion of the chain corresponds to 417–428; that stretch reads SESTIGSDSNGQ.

This sequence belongs to the insect chemoreceptor superfamily. Gustatory receptor (GR) family. Gr2a subfamily. As to expression, expressed in neurons of the terminal external chemosensory organ, the dorsal external chemosensory organ, as well as in the dorsal pharyngeal sense organ of larvae.

Its subcellular location is the cell membrane. Functionally, probable gustatory receptor which mediates acceptance or avoidance behavior, depending on its not yet determined substrates. The chain is Putative gustatory receptor 2a (Gr2a) from Drosophila melanogaster (Fruit fly).